We begin with the raw amino-acid sequence, 214 residues long: Cytochrome b (214 aa).

The next 4 membrane-spanning stretches (helical) occupy residues 31 to 51 (FGSM…FLAI), 75 to 96 (WIMQ…YIHI), 111 to 131 (WLSG…GYVL), and 176 to 196 (FFAL…IHIL). Residues His81 and His95 each coordinate heme b. 2 residues coordinate heme b: His180 and His194. His199 is a binding site for a ubiquinone.

This sequence belongs to the cytochrome b family. As to quaternary structure, the cytochrome bc1 complex contains 3 respiratory subunits (MT-CYB, CYC1 and UQCRFS1), 2 core proteins (UQCRC1 and UQCRC2) and probably 6 low-molecular weight proteins. Heme b serves as cofactor.

It localises to the mitochondrion inner membrane. In terms of biological role, component of the ubiquinol-cytochrome c reductase complex (complex III or cytochrome b-c1 complex) that is part of the mitochondrial respiratory chain. The b-c1 complex mediates electron transfer from ubiquinol to cytochrome c. Contributes to the generation of a proton gradient across the mitochondrial membrane that is then used for ATP synthesis. In Agkistrodon contortrix contortrix (Southern copperhead), this protein is Cytochrome b (MT-CYB).